A 204-amino-acid chain; its full sequence is Large ribosomal subunit protein uL4 (204 aa).

Residues 49 to 75 (TKGRSDVSGGGKKPWRQKGRGGARAGS) are disordered.

Belongs to the universal ribosomal protein uL4 family. As to quaternary structure, part of the 50S ribosomal subunit.

Its function is as follows. One of the primary rRNA binding proteins, this protein initially binds near the 5'-end of the 23S rRNA. It is important during the early stages of 50S assembly. It makes multiple contacts with different domains of the 23S rRNA in the assembled 50S subunit and ribosome. In terms of biological role, forms part of the polypeptide exit tunnel. In Campylobacter lari (strain RM2100 / D67 / ATCC BAA-1060), this protein is Large ribosomal subunit protein uL4.